The primary structure comprises 193 residues: Ion-translocating oxidoreductase complex subunit A (193 aa).

6 helical membrane passes run 5-25 (LLILVSTILVNNFVLVQFLGL), 38-58 (AMGMSLATTFVLTLSSLCSYL), 65-85 (APLGMEFLKTITFILVIAVVV), 102-122 (VLGIFLPLITTNCAVLGVALL), 134-154 (ILYGFGAAVGFSLVLTLFSAM), and 171-191 (AIGMITAGLMSLAFLGFTGLV).

Belongs to the NqrDE/RnfAE family. In terms of assembly, the complex is composed of six subunits: RnfA, RnfB, RnfC, RnfD, RnfE and RnfG.

It localises to the cell inner membrane. In terms of biological role, part of a membrane-bound complex that couples electron transfer with translocation of ions across the membrane. In Hahella chejuensis (strain KCTC 2396), this protein is Ion-translocating oxidoreductase complex subunit A.